A 216-amino-acid polypeptide reads, in one-letter code: Probable nicotinate-nucleotide adenylyltransferase (216 aa).

The protein belongs to the NadD family.

The enzyme catalyses nicotinate beta-D-ribonucleotide + ATP + H(+) = deamido-NAD(+) + diphosphate. Its pathway is cofactor biosynthesis; NAD(+) biosynthesis; deamido-NAD(+) from nicotinate D-ribonucleotide: step 1/1. Functionally, catalyzes the reversible adenylation of nicotinate mononucleotide (NaMN) to nicotinic acid adenine dinucleotide (NaAD). The sequence is that of Probable nicotinate-nucleotide adenylyltransferase from Geobacter metallireducens (strain ATCC 53774 / DSM 7210 / GS-15).